The sequence spans 270 residues: Carboxy-S-adenosyl-L-methionine synthase (270 aa).

S-adenosyl-L-methionine is bound by residues tyrosine 65, 90–92 (GCS), 143–144 (DI), asparagine 158, and arginine 225.

The protein belongs to the class I-like SAM-binding methyltransferase superfamily. Cx-SAM synthase family. Homodimer.

The catalysed reaction is prephenate + S-adenosyl-L-methionine = carboxy-S-adenosyl-L-methionine + 3-phenylpyruvate + H2O. Its function is as follows. Catalyzes the conversion of S-adenosyl-L-methionine (SAM) to carboxy-S-adenosyl-L-methionine (Cx-SAM). In Chromohalobacter salexigens (strain ATCC BAA-138 / DSM 3043 / CIP 106854 / NCIMB 13768 / 1H11), this protein is Carboxy-S-adenosyl-L-methionine synthase.